The primary structure comprises 106 residues: ATP-dependent Clp protease adapter protein ClpS (106 aa).

The protein belongs to the ClpS family. As to quaternary structure, binds to the N-terminal domain of the chaperone ClpA.

Functionally, involved in the modulation of the specificity of the ClpAP-mediated ATP-dependent protein degradation. This is ATP-dependent Clp protease adapter protein ClpS from Sodalis glossinidius (strain morsitans).